We begin with the raw amino-acid sequence, 124 residues long: Holo-[acyl-carrier-protein] synthase (124 aa).

The Mg(2+) site is built by Asp-8 and Glu-60.

Belongs to the P-Pant transferase superfamily. AcpS family. Mg(2+) serves as cofactor.

It is found in the cytoplasm. It catalyses the reaction apo-[ACP] + CoA = holo-[ACP] + adenosine 3',5'-bisphosphate + H(+). Functionally, transfers the 4'-phosphopantetheine moiety from coenzyme A to a Ser of acyl-carrier-protein. The polypeptide is Holo-[acyl-carrier-protein] synthase (Wolbachia pipientis subsp. Culex pipiens (strain wPip)).